Consider the following 270-residue polypeptide: Basigin (270 aa).

The N-terminal stretch at 1–21 is a signal peptide; sequence MAAVLFALLALALLRAGGASA. One can recognise an Ig-like C2-type domain in the interval 22–103; the sequence is AAGTVTTSVQ…TGEATLTVDG (82 aa). Residues 22–207 are Extracellular-facing; the sequence is AAGTVTTSVQ…VTLRVRSRLA (186 aa). 2 disulfide bridges follow: Cys-41-Cys-87 and Cys-126-Cys-185. N-linked (GlcNAc...) asparagine glycosylation is found at Asn-44, Asn-75, Asn-152, and Asn-186. The 99-residue stretch at 105 to 203 folds into the Ig-like V-type domain; that stretch reads PRIKAVKKSE…DAAVVTLRVR (99 aa). The chain crosses the membrane as a helical span at residues 208-228; sequence ALWPFLGIVAEVLVLVTVIFI. The Cytoplasmic segment spans residues 229-270; the sequence is YEKRRKPDEVLDDEDAGAAPLKSSGHHVNDDKGKNVRQRNAS. A disordered region spans residues 239–270; sequence LDDEDAGAAPLKSSGHHVNDDKGKNVRQRNAS. Ser-252 bears the Phosphoserine mark.

In terms of assembly, homooligomer. Interacts with VEGFA, KDR/VEGFR2, PPIA/CYPA, SLC1A3, SLC16A12, SLC16A11, ATP1B2, MAG, L1CAM and AJAP1. Interacts with PPIL2; regulates BSG transport to the cell membrane. Interacts with XKR8; promoting its localization at the cell membrane. Interacts with SLC16A3; interaction mediates SLC16A3 targeting to the plasma membrane. Interacts with SLC16A1; interaction mediates SLC16A1 targeting to the plasma membrane. Interacts with SLC16A6; this interaction mediates targeting to the plasma membrane.

The protein localises to the cell membrane. Its subcellular location is the endoplasmic reticulum membrane. The protein resides in the basolateral cell membrane. Its function is as follows. Signaling receptor for cyclophilins, essential for PPIA/CYPA and PPIB/CYPB-dependent signaling related to chemotaxis and adhesion of immune cells. Plays an important role in targeting the monocarboxylate transporters SLC16A1/GLUT1, SLC16A3, SLC16A8, SLC16A11 and SLC16A12 to the plasma membrane. Acts as a coreceptor for vascular endothelial growth factor receptor 2 (KDR/VEGFR2) in endothelial cells enhancing its VEGFA-mediated activation and downstream signaling. Promotes angiogenesis through EPAS1/HIF2A-mediated up-regulation of VEGFA and KDR/VEGFR2 in endothelial cells. This chain is Basigin (BSG), found in Oryctolagus cuniculus (Rabbit).